The chain runs to 384 residues: MTSATASLTPALNSLGFAKPPSETRVVVAMSGGVDSSVVAAELACEGYDVVGVTLQLYDHGAALAKKGACCAGRDIHDARRVAEEMGFPHYVLDYENTFREAVIDEFADSYLGGATPVPCIRCNERVKFKDLLETARDLEADCMATGHYIQRKMGPAKAELHSAADANRDQSYFLFSTTQEQLDYLRFPLGHLASKAETRALAAKHGLSVADKPDSQDICFVPNGDYASVIEKLRPGAGEPGEIVDMDGTVLGAHRGVIHYTIGQRRGLGIGGLETPLYVVKLDPDARRVIVGPKEALSTRHVPLREINWLGDAPLSSRAEWPIAVKVRSTRPPRDAILRPISDTEATVELLTPEEGVSPGQACVFYDPDGTRIFGGGWIWRGA.

ATP is bound by residues 29-36 and Leu-55; that span reads AMSGGVDS. Cys-123 acts as the Nucleophile in catalysis. Cys-123 and Cys-220 are disulfide-bonded. Gly-147 contributes to the ATP binding site. The interaction with tRNA stretch occupies residues 169–171; it reads RDQ. Cys-220 serves as the catalytic Cysteine persulfide intermediate.

Belongs to the MnmA/TRMU family.

It is found in the cytoplasm. The enzyme catalyses S-sulfanyl-L-cysteinyl-[protein] + uridine(34) in tRNA + AH2 + ATP = 2-thiouridine(34) in tRNA + L-cysteinyl-[protein] + A + AMP + diphosphate + H(+). In terms of biological role, catalyzes the 2-thiolation of uridine at the wobble position (U34) of tRNA, leading to the formation of s(2)U34. The sequence is that of tRNA-specific 2-thiouridylase MnmA from Dinoroseobacter shibae (strain DSM 16493 / NCIMB 14021 / DFL 12).